The chain runs to 328 residues: L-tyrosine isonitrile synthase (328 aa).

The protein belongs to the isocyanide synthase family. As to quaternary structure, monomer in solution.

The catalysed reaction is D-ribulose 5-phosphate + L-tyrosine = (2S)-3-(4-hydroxyphenyl)-2-isocyanopropanoate + hydroxyacetone + formaldehyde + phosphate + H2O + H(+). Involved in the biosynthesis of paerucumarin, a cyclized isocyano derivative of tyrosine. Responsible for the synthesis of the isonitrile group on tyrosine using the C2 of ribulose 5-phosphate as the source of the carbon atom. The polypeptide is L-tyrosine isonitrile synthase (Pseudomonas aeruginosa (strain ATCC 15692 / DSM 22644 / CIP 104116 / JCM 14847 / LMG 12228 / 1C / PRS 101 / PAO1)).